A 231-amino-acid chain; its full sequence is 5'-methylthioadenosine/S-adenosylhomocysteine nucleosidase (231 aa).

Glutamate 13 functions as the Proton acceptor in the catalytic mechanism. Substrate contacts are provided by residues glycine 79, methionine 154, and methionine 175–glutamate 176. The active-site Proton donor is aspartate 199.

This sequence belongs to the PNP/UDP phosphorylase family. MtnN subfamily.

The enzyme catalyses S-adenosyl-L-homocysteine + H2O = S-(5-deoxy-D-ribos-5-yl)-L-homocysteine + adenine. The catalysed reaction is S-methyl-5'-thioadenosine + H2O = 5-(methylsulfanyl)-D-ribose + adenine. It carries out the reaction 5'-deoxyadenosine + H2O = 5-deoxy-D-ribose + adenine. Its pathway is amino-acid biosynthesis; L-methionine biosynthesis via salvage pathway; S-methyl-5-thio-alpha-D-ribose 1-phosphate from S-methyl-5'-thioadenosine (hydrolase route): step 1/2. Catalyzes the irreversible cleavage of the glycosidic bond in both 5'-methylthioadenosine (MTA) and S-adenosylhomocysteine (SAH/AdoHcy) to adenine and the corresponding thioribose, 5'-methylthioribose and S-ribosylhomocysteine, respectively. Also cleaves 5'-deoxyadenosine, a toxic by-product of radical S-adenosylmethionine (SAM) enzymes, into 5-deoxyribose and adenine. This Marinomonas sp. (strain MWYL1) protein is 5'-methylthioadenosine/S-adenosylhomocysteine nucleosidase.